The chain runs to 264 residues: Small ribosomal subunit protein eS1 (264 aa).

The disordered stretch occupies residues 232–264 (HGEGGGSGKPSGDETGAKVERADGYEPPVQESV). A compositionally biased stretch (basic and acidic residues) spans 242–255 (SGDETGAKVERADG).

It belongs to the eukaryotic ribosomal protein eS1 family. As to quaternary structure, component of the small ribosomal subunit. Mature ribosomes consist of a small (40S) and a large (60S) subunit. The 40S subunit contains about 33 different proteins and 1 molecule of RNA (18S). The 60S subunit contains about 49 different proteins and 3 molecules of RNA (28S, 5.8S and 5S). Part of the small subunit (SSU) processome, composed of more than 70 proteins and the RNA chaperone small nucleolar RNA (snoRNA) U3.

The protein localises to the cytoplasm. Its subcellular location is the nucleus. The protein resides in the nucleolus. Its function is as follows. Component of the small ribosomal subunit. The ribosome is a large ribonucleoprotein complex responsible for the synthesis of proteins in the cell. Part of the small subunit (SSU) processome, first precursor of the small eukaryotic ribosomal subunit. During the assembly of the SSU processome in the nucleolus, many ribosome biogenesis factors, an RNA chaperone and ribosomal proteins associate with the nascent pre-rRNA and work in concert to generate RNA folding, modifications, rearrangements and cleavage as well as targeted degradation of pre-ribosomal RNA by the RNA exosome. May play a role during erythropoiesis. The protein is Small ribosomal subunit protein eS1 of Ophiophagus hannah (King cobra).